The primary structure comprises 503 residues: Aspartyl/glutamyl-tRNA(Asn/Gln) amidotransferase subunit B (503 aa).

Belongs to the GatB/GatE family. GatB subfamily. As to quaternary structure, heterotrimer of A, B and C subunits.

The catalysed reaction is L-glutamyl-tRNA(Gln) + L-glutamine + ATP + H2O = L-glutaminyl-tRNA(Gln) + L-glutamate + ADP + phosphate + H(+). It catalyses the reaction L-aspartyl-tRNA(Asn) + L-glutamine + ATP + H2O = L-asparaginyl-tRNA(Asn) + L-glutamate + ADP + phosphate + 2 H(+). Its function is as follows. Allows the formation of correctly charged Asn-tRNA(Asn) or Gln-tRNA(Gln) through the transamidation of misacylated Asp-tRNA(Asn) or Glu-tRNA(Gln) in organisms which lack either or both of asparaginyl-tRNA or glutaminyl-tRNA synthetases. The reaction takes place in the presence of glutamine and ATP through an activated phospho-Asp-tRNA(Asn) or phospho-Glu-tRNA(Gln). The sequence is that of Aspartyl/glutamyl-tRNA(Asn/Gln) amidotransferase subunit B from Cereibacter sphaeroides (strain ATCC 17029 / ATH 2.4.9) (Rhodobacter sphaeroides).